The sequence spans 336 residues: Palmitoyltransferase PFA3 (336 aa).

The Cytoplasmic portion of the chain corresponds to 1–6; it reads MNDRLS. Residues 7–29 form a helical membrane-spanning segment; it reads LTSLFPRCLTTCLYIWTAYITLT. At 30–37 the chain is on the vacuolar side; the sequence is RIHQIPRW. A helical transmembrane segment spans residues 38–58; sequence FLALTIVPTLAVALYTYYKVI. The Cytoplasmic segment spans residues 59–147; sequence ARGPGSPLDF…AECTGFRNQK (89 aa). A DHHC domain is found at 104-154; it reads RVCQVCHVWKPDRCHHCSSCDVCILKMDHHCPWFAECTGFRNQKFFIQFLM. Residues 148 to 168 traverse the membrane as a helical segment; it reads FFIQFLMYTTLYAFLVLIYTC. The Vacuolar segment spans residues 169–188; that stretch reads YELGTWFNSGSFNRELIDFH. A helical membrane pass occupies residues 189–209; the sequence is LLGVALLAVAVFISVLAFTCF. Topologically, residues 210–336 are cytoplasmic; it reads SIYQVCKNQT…RASVEIIDAN (127 aa).

It belongs to the DHHC palmitoyltransferase family. PFA3 subfamily. Post-translationally, autopalmitoylated.

It localises to the vacuole membrane. The catalysed reaction is L-cysteinyl-[protein] + hexadecanoyl-CoA = S-hexadecanoyl-L-cysteinyl-[protein] + CoA. Palmitoyltransferase specific for VAC8. Palmitoylates VAC8 at one or more of its N-terminal cysteine residues, which is required for its proper membrane localization. In Saccharomyces cerevisiae (strain ATCC 204508 / S288c) (Baker's yeast), this protein is Palmitoyltransferase PFA3 (PFA3).